Here is a 286-residue protein sequence, read N- to C-terminus: Aminoglycoside N(3)-acetyltransferase VIII (286 aa).

Belongs to the antibiotic N-acetyltransferase family.

It catalyses the reaction a 2-deoxystreptamine antibiotic + acetyl-CoA = an N(3)-acetyl-2-deoxystreptamine antibiotic + CoA + H(+). In terms of biological role, resistance to neomycin. The chain is Aminoglycoside N(3)-acetyltransferase VIII (aacC8) from Streptomyces fradiae (Streptomyces roseoflavus).